The following is a 354-amino-acid chain: B-cell differentiation antigen CD72 (354 aa).

At 1–95 (MADAITYADL…PRCPTVCLQY (95 aa)) the chain is on the cytoplasmic side. Phosphotyrosine; by LYN is present on residues Y7 and Y39. The helical; Signal-anchor for type II membrane protein transmembrane segment at 96 to 116 (FLLGLLVSCLMLGVAVICLGV) threads the bilayer. At 117–354 (RYLQVSRQFQ…FRFPDGINLN (238 aa)) the chain is on the extracellular side. N-linked (GlcNAc...) asparagine glycosylation occurs at N136. The region spanning 231 to 342 (CCPCGWIPYQ…AELHPCICES (112 aa)) is the C-type lectin domain. 3 disulfides stabilise this stretch: C232–C243, C260–C340, and C315–C332.

As to quaternary structure, homodimer; disulfide-linked. Associates with CD5. Interacts (tyrosine phosphorylated) with PTPN6/SHP-1. In terms of processing, phosphorylated upon engagement of the B-cell receptor, probably by LYN or SYK. Phosphorylation at Tyr-7 is important for interaction with PTPN6/SHP-1. As to expression, pre-B-cells and B-cells but not terminally differentiated plasma cells.

It is found in the membrane. Functionally, co-receptor of B cell receptor (BCR) that plays both positive and negative roles on B-cell functions. Recognizes the Sm/ribonucleoprotein (RNP) self-antigen ligand, and coligation of CD72 and BCR inhibits BCR signaling. Mechanistically, ligand binding leads to the recruitment of PTPN6/SHP-1 to the BCR complex which is inhibitory to BCR signaling. Acts also as a ligand for CD5 and thereby plays a critical role in maintaining regulatory T and B-cell homeostasis. The protein is B-cell differentiation antigen CD72 (Cd72) of Mus musculus (Mouse).